Consider the following 399-residue polypeptide: Subtilisin-like protease 1 (399 aa).

Positions 1–19 (MGVFRFISISLAAVSAANA) are cleaved as a signal peptide. Positions 20-116 (AQILSMPHAQ…VEPDTIISVH (97 aa)) are excised as a propeptide. In terms of domain architecture, Inhibitor I9 spans 34 to 115 (SYIVMMKDDT…FVEPDTIISV (82 aa)). Residues 126–399 (SWGLARISNP…TNVLINNGGA (274 aa)) form the Peptidase S8 domain. Catalysis depends on charge relay system residues aspartate 158 and histidine 190. The interval 175–198 (GSNQVNDGDDRDGSGHGTHTSGTM) is disordered. Asparagine 251 carries an N-linked (GlcNAc...) asparagine glycan. Over residues 282 to 294 (NDNQDAQSSSPAS) the composition is skewed to polar residues. The disordered stretch occupies residues 282–312 (NDNQDAQSSSPASEPSVCTVGSSAEDDSRSS). Serine 345 serves as the catalytic Charge relay system.

It belongs to the peptidase S8 family.

It is found in the secreted. Secreted subtilisin-like serine protease with keratinolytic activity that contributes to pathogenicity. The chain is Subtilisin-like protease 1 (SUB1) from Arthroderma benhamiae (Trichophyton mentagrophytes).